Reading from the N-terminus, the 141-residue chain is Large ribosomal subunit protein uL11c (141 aa).

The protein belongs to the universal ribosomal protein uL11 family. In terms of assembly, part of the ribosomal stalk of the 50S ribosomal subunit. Interacts with L10 and the large rRNA to form the base of the stalk. L10 forms an elongated spine to which L12 dimers bind in a sequential fashion forming a multimeric L10(L12)X complex.

The protein localises to the plastid. The protein resides in the chloroplast. In terms of biological role, forms part of the ribosomal stalk which helps the ribosome interact with GTP-bound translation factors. The chain is Large ribosomal subunit protein uL11c from Guillardia theta (Cryptophyte).